The primary structure comprises 283 residues: Release factor glutamine methyltransferase (283 aa).

S-adenosyl-L-methionine is bound by residues 121-125, aspartate 144, and asparagine 188; that span reads GTGSG. Residue 188-191 participates in substrate binding; the sequence is NPPY.

The protein belongs to the protein N5-glutamine methyltransferase family. PrmC subfamily.

It catalyses the reaction L-glutaminyl-[peptide chain release factor] + S-adenosyl-L-methionine = N(5)-methyl-L-glutaminyl-[peptide chain release factor] + S-adenosyl-L-homocysteine + H(+). Functionally, methylates the class 1 translation termination release factors RF1/PrfA and RF2/PrfB on the glutamine residue of the universally conserved GGQ motif. The polypeptide is Release factor glutamine methyltransferase (Bacillus anthracis).